The chain runs to 145 residues: 3-dehydroquinate dehydratase (145 aa).

Residue Y23 is the Proton acceptor of the active site. The substrate site is built by N73, H79, and D86. The active-site Proton donor is H99. Residues 100 to 101 (LS) and R110 contribute to the substrate site.

This sequence belongs to the type-II 3-dehydroquinase family. As to quaternary structure, homododecamer.

The enzyme catalyses 3-dehydroquinate = 3-dehydroshikimate + H2O. It functions in the pathway metabolic intermediate biosynthesis; chorismate biosynthesis; chorismate from D-erythrose 4-phosphate and phosphoenolpyruvate: step 3/7. Its function is as follows. Catalyzes a trans-dehydration via an enolate intermediate. This chain is 3-dehydroquinate dehydratase, found in Desulfitobacterium hafniense (strain DSM 10664 / DCB-2).